A 122-amino-acid chain; its full sequence is Large ribosomal subunit protein bL17 (122 aa).

The protein belongs to the bacterial ribosomal protein bL17 family. Part of the 50S ribosomal subunit. Contacts protein L32.

The protein is Large ribosomal subunit protein bL17 of Neisseria gonorrhoeae (strain ATCC 700825 / FA 1090).